Here is a 131-residue protein sequence, read N- to C-terminus: D-ribose pyranase (131 aa).

His-20 functions as the Proton donor in the catalytic mechanism. Substrate-binding positions include Asp-28, His-98, and 120 to 122; that span reads YSN.

The protein belongs to the RbsD / FucU family. RbsD subfamily. As to quaternary structure, homodecamer.

The protein localises to the cytoplasm. The catalysed reaction is beta-D-ribopyranose = beta-D-ribofuranose. The protein operates within carbohydrate metabolism; D-ribose degradation; D-ribose 5-phosphate from beta-D-ribopyranose: step 1/2. Functionally, catalyzes the interconversion of beta-pyran and beta-furan forms of D-ribose. The sequence is that of D-ribose pyranase from Pediococcus pentosaceus (strain ATCC 25745 / CCUG 21536 / LMG 10740 / 183-1w).